Reading from the N-terminus, the 177-residue chain is Translation initiation factor IF-3 (177 aa).

It belongs to the IF-3 family. Monomer.

The protein resides in the cytoplasm. Functionally, IF-3 binds to the 30S ribosomal subunit and shifts the equilibrium between 70S ribosomes and their 50S and 30S subunits in favor of the free subunits, thus enhancing the availability of 30S subunits on which protein synthesis initiation begins. This chain is Translation initiation factor IF-3, found in Nostoc punctiforme (strain ATCC 29133 / PCC 73102).